The chain runs to 126 residues: MARLVGVDLPRDKRLEVALTYIYGVGRTRAADTLKATGISPDLRVKDLGDAEIVALRDHLEGNYKIEGDLRREVAADIRRKVEIGSYEGLRHRRGLPVRGQRTKTNARTRKGPKRTVAGKKKAGRK.

Residues 93-126 (RRGLPVRGQRTKTNARTRKGPKRTVAGKKKAGRK) form a disordered region.

The protein belongs to the universal ribosomal protein uS13 family. In terms of assembly, part of the 30S ribosomal subunit. Forms a loose heterodimer with protein S19. Forms two bridges to the 50S subunit in the 70S ribosome.

Functionally, located at the top of the head of the 30S subunit, it contacts several helices of the 16S rRNA. In the 70S ribosome it contacts the 23S rRNA (bridge B1a) and protein L5 of the 50S subunit (bridge B1b), connecting the 2 subunits; these bridges are implicated in subunit movement. Contacts the tRNAs in the A and P-sites. The protein is Small ribosomal subunit protein uS13 of Beutenbergia cavernae (strain ATCC BAA-8 / DSM 12333 / CCUG 43141 / JCM 11478 / NBRC 16432 / NCIMB 13614 / HKI 0122).